A 645-amino-acid polypeptide reads, in one-letter code: Acetyl-coenzyme A synthetase (645 aa).

CoA-binding positions include 190 to 193 (RGGR) and Thr-308. ATP contacts are provided by residues 384–386 (GEP), 408–413 (DTWWQT), Asp-497, and Arg-512. Ser-520 provides a ligand contact to CoA. Arg-523 is an ATP binding site. The Mg(2+) site is built by Val-534, His-536, and Val-539. Lys-606 carries the post-translational modification N6-acetyllysine.

This sequence belongs to the ATP-dependent AMP-binding enzyme family. Mg(2+) is required as a cofactor. In terms of processing, acetylated. Deacetylation by the SIR2-homolog deacetylase activates the enzyme.

It carries out the reaction acetate + ATP + CoA = acetyl-CoA + AMP + diphosphate. Functionally, catalyzes the conversion of acetate into acetyl-CoA (AcCoA), an essential intermediate at the junction of anabolic and catabolic pathways. AcsA undergoes a two-step reaction. In the first half reaction, AcsA combines acetate with ATP to form acetyl-adenylate (AcAMP) intermediate. In the second half reaction, it can then transfer the acetyl group from AcAMP to the sulfhydryl group of CoA, forming the product AcCoA. In Halorhodospira halophila (strain DSM 244 / SL1) (Ectothiorhodospira halophila (strain DSM 244 / SL1)), this protein is Acetyl-coenzyme A synthetase.